The sequence spans 352 residues: Probable cytosolic iron-sulfur protein assembly protein CIAO1 homolog (352 aa).

7 WD repeats span residues 12–51 (ASNK…LWGS), 58–97 (AHKK…SAPE), 106–145 (GHTS…DVQC), 151–190 (PHSQ…WTVF), 195–234 (GHDS…GKSS), 245–284 (YHTR…LTHI), and 303–352 (AHSE…EYEL).

This sequence belongs to the WD repeat CIA1 family.

In terms of biological role, essential component of the cytosolic iron-sulfur (Fe/S) protein assembly machinery. Required for the maturation of extramitochondrial Fe/S proteins. The sequence is that of Probable cytosolic iron-sulfur protein assembly protein CIAO1 homolog from Schistosoma japonicum (Blood fluke).